The sequence spans 90 residues: Probable Fe(2+)-trafficking protein (90 aa).

The protein belongs to the Fe(2+)-trafficking protein family.

Could be a mediator in iron transactions between iron acquisition and iron-requiring processes, such as synthesis and/or repair of Fe-S clusters in biosynthetic enzymes. This is Probable Fe(2+)-trafficking protein from Polynucleobacter asymbioticus (strain DSM 18221 / CIP 109841 / QLW-P1DMWA-1) (Polynucleobacter necessarius subsp. asymbioticus).